Here is a 315-residue protein sequence, read N- to C-terminus: HTH-type transcriptional regulator TreR (315 aa).

Residues 5-59 (LTIKDIARLSGVGKSTVSRVLNNESGVSERTRERVEAVMNQHGFSPSRSARAMRG) form the HTH lacI-type domain. Positions 7-26 (IKDIARLSGVGKSTVSRVLN) form a DNA-binding region, H-T-H motif. Alpha,alpha-trehalose 6-phosphate is bound by residues 71–77 (RLDSLSE), G126, R147, 187–190 (DITT), R194, T242, and Y284.

In terms of assembly, homodimer.

In terms of biological role, repressor of the treBC operon. It is able to bind trehalose-6-phosphate. The chain is HTH-type transcriptional regulator TreR (treR) from Salmonella typhimurium (strain LT2 / SGSC1412 / ATCC 700720).